A 117-amino-acid polypeptide reads, in one-letter code: LYR motif-containing protein 1 (117 aa).

This sequence belongs to the complex I LYR family.

This chain is LYR motif-containing protein 1 (lyrm1), found in Dictyostelium discoideum (Social amoeba).